A 307-amino-acid polypeptide reads, in one-letter code: Formate hydrogenlyase subunit 4 (307 aa).

The Periplasmic portion of the chain corresponds to 1-2; sequence MS. A helical membrane pass occupies residues 3–23; that stretch reads VLYPLIQALVLFAVAPLLSGI. The Cytoplasmic segment spans residues 24–67; sequence TRVARARLHNRRGPGVLQEYRDIIKLLGRQSVGPDASGWVFRLT. Residues 68–88 traverse the membrane as a helical segment; it reads PYVMVGVMLTIATALPVVTVG. At 89-93 the chain is on the periplasmic side; sequence SPLPQ. The chain crosses the membrane as a helical span at residues 94–114; the sequence is LGDLITLLYLFAIARFFFAIS. At 115–131 the chain is on the cytoplasmic side; that stretch reads GLDTGSPFTAIGASREA. The chain crosses the membrane as a helical span at residues 132–152; that stretch reads MLGVLVEPMLLLGLWVAAQVA. The Periplasmic portion of the chain corresponds to 153–167; sequence GSTNISNITDTVYHW. A helical transmembrane segment spans residues 168–188; the sequence is PLSQSIPLVLALCACAFATFI. The Cytoplasmic portion of the chain corresponds to 189–221; the sequence is EMGKLPFDLAEAEQELQEGPLSEYSGSGFGVMK. The helical transmembrane segment at 222–242 threads the bilayer; it reads WGISLKQLVVLQMFVGVFIPW. Residues 243–253 lie on the Periplasmic side of the membrane; it reads GQMETFTAGGL. A helical transmembrane segment spans residues 254 to 274; that stretch reads LLALVIAIVKLVVGVLVIALF. Residues 275–284 lie on the Cytoplasmic side of the membrane; the sequence is ENSMARLRLD. Residues 285 to 305 form a helical membrane-spanning segment; it reads ITPRITWAGFGFAFLAFVSLL. At 306–307 the chain is on the periplasmic side; it reads AA.

It belongs to the complex I subunit 1 family. As to quaternary structure, FHL comprises of a formate dehydrogenase, unidentified electron carriers and a hydrogenase (isoenzyme 3). In this non-energy conserving pathway molecular hydrogen and carbodioxide from formate are released.

The protein localises to the cell inner membrane. The polypeptide is Formate hydrogenlyase subunit 4 (hycD) (Escherichia coli (strain K12)).